The following is an 876-amino-acid chain: DNA polymerase I (876 aa).

One can recognise a 5'-3' exonuclease domain in the interval 1–310 (MKNKLVLIDG…FAIADSVTDE (310 aa)). The subtilisin large fragment stretch occupies residues 289-876 (TDEGEKPLAG…HYGPTWYDAK (588 aa)). The interval 469–876 (EQDRLLTELE…HYGPTWYDAK (408 aa)) is polymerase.

It belongs to the DNA polymerase type-A family. Single-chain monomer with multiple functions.

It catalyses the reaction DNA(n) + a 2'-deoxyribonucleoside 5'-triphosphate = DNA(n+1) + diphosphate. In terms of biological role, in addition to polymerase activity, the recombinant enzyme has strand displacement and 5'-3' exonuclease activity, but lacks proofreading 3'-5' exonuclease activity. The chain is DNA polymerase I (polA) from Geobacillus stearothermophilus (Bacillus stearothermophilus).